The chain runs to 897 residues: 3'-5' exonuclease DinG (897 aa).

The Exonuclease domain maps to valine 8–leucine 161. Residues serine 241 to arginine 496 enclose the Helicase ATP-binding domain. Residue alanine 276–serine 283 coordinates ATP. A DEAH box motif is present at residues aspartate 448–histidine 451. In terms of domain architecture, Helicase C-terminal spans asparagine 703–glutamine 893.

This sequence belongs to the helicase family. DinG subfamily. Type 2 sub-subfamily.

3'-5' exonuclease. This chain is 3'-5' exonuclease DinG, found in Staphylococcus aureus (strain MSSA476).